Here is a 382-residue protein sequence, read N- to C-terminus: Proton extrusion protein PxcA (382 aa).

The next 4 membrane-spanning stretches (helical) occupy residues 156-176 (TLIS…VQQI), 257-277 (AIKN…VCII), 305-325 (IILF…QVLL), and 340-360 (FILL…KYWI).

Belongs to the CemA family.

Its subcellular location is the cell inner membrane. Required for H(+) efflux immediately after light irradiation to form a rapid H(+) concentration gradient across the thylakoid membranes. Together with PxcL, contributes to transient H(+) uptake following dark to light transition. The polypeptide is Proton extrusion protein PxcA (Prochlorococcus marinus (strain MIT 9313)).